The chain runs to 1315 residues: Claspin (1315 aa).

Disordered stretches follow at residues 22–276 (EAAD…AARL) and 345–474 (PADA…EQKT). Phosphoserine is present on residues S26, S42, S46, S53, S65, and S67. Positions 65 to 74 (SDSEAEDRDD) are enriched in acidic residues. Residues 91-101 (NLHSGKSQSRS) are compositionally biased toward polar residues. Residues 108–118 (DSDESDMEETP) show a composition bias toward acidic residues. Phosphoserine is present on residues S109, S112, and S119. The segment covering 119–128 (SQESPETQEA) has biased composition (polar residues). 2 stretches are compositionally biased toward basic and acidic residues: residues 153-178 (LLRE…MEKI) and 186-197 (TRCEESDADRPL). Positions 159 to 187 (EGKAKSKRRLEKEERTMEKIRRLKKKETR) form a coiled coil. Acidic residues predominate over residues 205–228 (EDSDLFETGLEEENDSALEDEESL). S220 is modified (phosphoserine). A compositionally biased stretch (basic residues) spans 235 to 245 (VKNKVKNRKKK). Residue S255 is modified to Phosphoserine. Composition is skewed to basic and acidic residues over residues 391–415 (ACGK…DDRP) and 455–470 (EELK…EGMP). S522 carries the post-translational modification Phosphoserine. A coiled-coil region spans residues 599 to 626 (EKLQMLKAKLQEAMKLRRLEERQKRQAL). The tract at residues 625–691 (ALFKLDNEDG…SSDIGKSVAL (67 aa)) is disordered. Positions 632–657 (EDGFEEEEEEEEMTDESEEDGEEETT) are enriched in acidic residues. The segment covering 669–679 (KDEKETDKENT) has biased composition (basic and acidic residues). Phosphoserine is present on residues S698, S701, S709, S722, and S740. A disordered region spans residues 713–750 (MGYFPTEEKSETDEYLAKQSDKLDEDDSSSLLTKESSH). Residues 741–750 (SSLLTKESSH) show a composition bias toward low complexity. Phosphoserine is present on residues S785, S787, S810, S816, and S823. At K868 the chain carries N6-acetyllysine. 2 CKB motif repeats span residues 887–896 (ELLDLCTGQF) and 917–926 (ELLNLCSGKF). Position 893 is a phosphothreonine; by CHEK1 (T893). Disordered stretches follow at residues 924–1002 (GKFP…NDEE) and 1032–1052 (EDEA…DGEE). Phosphoserine is present on S932. A CKB motif 3 repeat occupies 954–963 (EALALCSGSF). The acidic patch stretch occupies residues 966-1063 (DREEEGEEEE…DEYEEDVIDE (98 aa)). Acidic residues-rich tracts occupy residues 967–977 (REEEGEEEEFG), 990–1002 (SDED…NDEE), and 1043–1052 (GSEDEYDGEE). 3 positions are modified to phosphoserine: S990, S996, and S998. A coiled-coil region spans residues 1001 to 1036 (EELALDLEDDEEELLKQSEKMKRQMRLKKYLEDEAE). Residues S1133 and S1265 each carry the phosphoserine modification. The segment at 1264–1315 (LSPTKAEAAKDSSKPQVRRRGLSSMMSPSPKRLKTNGSSPGPKRSIFRYLES) is disordered.

It belongs to the claspin family. As to quaternary structure, interacts (phosphorylation-dependent) with CHEK1; regulates CLSPN function in checkpoint for DNA damage and replication. Interacts with ATR and RAD9A and these interactions are slightly reduced during checkpoint activation. Interacts with BRCA1 and this interaction increases during checkpoint activation. Interacts with TIMELESS; the interaction is required for leading-strand replication. Associates with the MCM2-7 complex and other replisome factors. Interacts (via the acidic patch) with CDC7; the interaction is required for phosphorylation of MCM proteins and CLASPIN by CDC7. Interacts with PCNA. Interacts with FZR1. In terms of processing, phosphorylated. Undergoes ATR-dependent phosphorylation by CHEK1 during activation of DNA replication or damage checkpoints. Phosphorylation by CSNK1G1/CK1 promotes CHEK1 binding. Phosphorylated by CDC7 during DNA replication, phosphorylation inhibits interaction between the acidic patch and N-terminal segments leading to increased binding to DNA and PCNA. Post-translationally, ubiquitinated by the anaphase promoting complex/cyclosome (APC/C) during G1 phase, leading to its degradation by the proteasome. Ubiquitination is mediated via its interaction with FZR1/CDH1. Following DNA damage, it is deubiquitinated by USP28 in G2 phase, preventing its degradation. Proteolytically cleaved by caspase-7 (CASP7) in response to apoptosis, leading to its inactivation.

Its subcellular location is the nucleus. In terms of biological role, required for checkpoint mediated cell cycle arrest in response to inhibition of DNA replication or to DNA damage induced by both ionizing and UV irradiation. Adapter protein which binds to BRCA1 and the checkpoint kinase CHEK1 and facilitates the ATR-dependent phosphorylation of both proteins. Also required to maintain normal rates of replication fork progression during unperturbed DNA replication. Binds directly to DNA, with particular affinity for branched or forked molecules and interacts with multiple protein components of the replisome such as the MCM2-7 complex and TIMELESS. Important for initiation of DNA replication, recruits kinase CDC7 to phosphorylate MCM2-7 components. In Mus musculus (Mouse), this protein is Claspin (Clspn).